The primary structure comprises 285 residues: (3S)-malyl-CoA thioesterase (285 aa).

2 residues coordinate substrate: R70 and E122. The Mg(2+) site is built by E122 and D148.

Belongs to the HpcH/HpaI aldolase family. As to quaternary structure, homodimer or homotrimer. Requires Mg(2+) as cofactor.

It carries out the reaction (S)-malyl-CoA + H2O = (S)-malate + CoA + H(+). Its function is as follows. Catalyzes the hydrolysis of (3S)-malyl-CoA to (3S)-malate and free CoA. Inactive towards beta-methylmalyl-CoA and other CoA esters. This Cereibacter sphaeroides (strain KD131 / KCTC 12085) (Rhodobacter sphaeroides) protein is (3S)-malyl-CoA thioesterase.